The sequence spans 206 residues: N-(5'-phosphoribosyl)anthranilate isomerase (206 aa).

The protein belongs to the TrpF family.

It carries out the reaction N-(5-phospho-beta-D-ribosyl)anthranilate = 1-(2-carboxyphenylamino)-1-deoxy-D-ribulose 5-phosphate. The protein operates within amino-acid biosynthesis; L-tryptophan biosynthesis; L-tryptophan from chorismate: step 3/5. The chain is N-(5'-phosphoribosyl)anthranilate isomerase from Pseudomonas putida (strain GB-1).